The primary structure comprises 143 residues: MRLEKSLVLIKPDAVERNLIGKILEVYEGAGLKIKAMEMKQINKEFAEKHYEEHRDKQFFNSLIKYITRSPLVALILEGEDAINKIRSLNGATNPEKAEFGTIRRRFALSGTENSVHASDSIESAEKEIKLWFPKVFYEEICG.

The ATP site is built by Lys11, Phe59, Arg87, Thr93, Arg104, and Asn114. His117 (pros-phosphohistidine intermediate) is an active-site residue.

The protein belongs to the NDK family. Homotetramer. The cofactor is Mg(2+).

Its subcellular location is the cytoplasm. It catalyses the reaction a 2'-deoxyribonucleoside 5'-diphosphate + ATP = a 2'-deoxyribonucleoside 5'-triphosphate + ADP. It carries out the reaction a ribonucleoside 5'-diphosphate + ATP = a ribonucleoside 5'-triphosphate + ADP. Its function is as follows. Major role in the synthesis of nucleoside triphosphates other than ATP. The ATP gamma phosphate is transferred to the NDP beta phosphate via a ping-pong mechanism, using a phosphorylated active-site intermediate. In Clostridium perfringens (strain ATCC 13124 / DSM 756 / JCM 1290 / NCIMB 6125 / NCTC 8237 / Type A), this protein is Nucleoside diphosphate kinase.